We begin with the raw amino-acid sequence, 322 residues long: Arginase-1 (322 aa).

A compositionally biased stretch (low complexity) spans 1–12 (MSSKSKSIGIIG). A disordered region spans residues 1-26 (MSSKSKSIGIIGAPFSKGQPRGGVEE). A Phosphoserine modification is found at S7. The residue at position 17 (K17) is an N6-succinyllysine. S62 is subject to Phosphoserine. H101, D124, H126, and D128 together coordinate Mn(2+). Residues 126–130 (HTDIN) and 137–139 (SGN) each bind substrate. Residue S163 is modified to Phosphoserine. Residue D183 participates in substrate binding. Mn(2+)-binding residues include D232 and D234. Residues T246 and E277 each contribute to the substrate site.

Belongs to the arginase family. In terms of assembly, homotrimer. Interacts with CMTM6. Mn(2+) serves as cofactor.

It is found in the cytoplasm. It catalyses the reaction L-arginine + H2O = urea + L-ornithine. It functions in the pathway nitrogen metabolism; urea cycle; L-ornithine and urea from L-arginine: step 1/1. This Oryctolagus cuniculus (Rabbit) protein is Arginase-1 (ARG1).